Reading from the N-terminus, the 502-residue chain is ATP synthase subunit alpha (502 aa).

Residue 169 to 176 (GDRQTGKT) coordinates ATP.

Belongs to the ATPase alpha/beta chains family. F-type ATPases have 2 components, CF(1) - the catalytic core - and CF(0) - the membrane proton channel. CF(1) has five subunits: alpha(3), beta(3), gamma(1), delta(1), epsilon(1). CF(0) has three main subunits: a(1), b(2) and c(9-12). The alpha and beta chains form an alternating ring which encloses part of the gamma chain. CF(1) is attached to CF(0) by a central stalk formed by the gamma and epsilon chains, while a peripheral stalk is formed by the delta and b chains.

The protein localises to the cell inner membrane. The enzyme catalyses ATP + H2O + 4 H(+)(in) = ADP + phosphate + 5 H(+)(out). In terms of biological role, produces ATP from ADP in the presence of a proton gradient across the membrane. The alpha chain is a regulatory subunit. The chain is ATP synthase subunit alpha from Desulfovibrio desulfuricans (strain ATCC 27774 / DSM 6949 / MB).